Consider the following 530-residue polypeptide: Pancreatic secretory granule membrane major glycoprotein GP2 (530 aa).

A signal peptide spans 1–21; it reads MVACDLLWLAAASCLLTLVFP. A glycan (N-linked (GlcNAc...) asparagine) is linked at Asn33. Cystine bridges form between Cys41-Cys52, Cys56-Cys150, Cys78-Cys168, Cys100-Cys138, Cys106-Cys173, Cys131-Cys139, Cys183-Cys193, Cys187-Cys202, Cys204-Cys234, Cys222-Cys313, and Cys254-Cys277. Positions 54–74 are D10C; the sequence is DPCQNHTVLNDPSRSTENTVS. N-linked (GlcNAc...) asparagine glycans are attached at residues Asn58 and Asn127. Residues 179-223 form the EGF-like domain; the sequence is APKKCEIACRPEEECVFQNNSWTCVCRQDLNVSDTLSLQPLLDCG. Asn197 and Asn209 each carry an N-linked (GlcNAc...) asparagine glycan. A ZP-N region spans residues 221–314; the sequence is DCGANEIKVK…FLVNVNFQCA (94 aa). In terms of domain architecture, ZP spans 221–477; the sequence is DCGANEIKVK…PSCSTSRLRS (257 aa). Residues Asn284 and Asn320 are each glycosylated (N-linked (GlcNAc...) asparagine). A flexible ZP-N/ZP-C linker region spans residues 315–338; the sequence is YPLDMNVSLQTALQPIVSSLNVDV. The internal hydrophobic patch (IHP) stretch occupies residues 339–350; the sequence is GGAGEFTVTMAL. The tract at residues 339-477 is ZP-C; sequence GGAGEFTVTM…PSCSTSRLRS (139 aa). Disulfide bonds link Cys394-Cys454, Cys415-Cys470, and Cys459-Cys466. The tract at residues 484–492 is external hydrophobic patch (EHP); it reads LTRVLDIGP. A lipid anchor (GPI-anchor amidated asparagine) is attached at Asn505. The propeptide at 506–530 is removed in mature form; sequence GTPRNTGFLLAWPTFFLPVFLAWLF.

Interacts with SYCN. Interacts with bacterial adhesin fimH. Post-translationally, N-glycosylated. In terms of tissue distribution, expressed in pancreas.

Its subcellular location is the zymogen granule membrane. The protein localises to the secreted. The protein resides in the cell membrane. It is found in the apical cell membrane. It localises to the membrane raft. Its subcellular location is the endosome. Its function is as follows. Functions as an intestinal M-cell transcytotic receptor specific of type-I-piliated bacteria that participates in the mucosal immune response toward these bacteria. At the apical membrane of M-cells it binds fimH, a protein of the bacteria type I pilus tip. Internalizes bound bacteria, like E.coli and S.typhimurium, from the lumen of the intestine and delivers them, through M-cells, to the underlying organized lymphoid follicles where they are captured by antigen-presenting dendritic cells to elicit a mucosal immune response. The chain is Pancreatic secretory granule membrane major glycoprotein GP2 from Rattus norvegicus (Rat).